A 208-amino-acid polypeptide reads, in one-letter code: FMN-dependent NADH:quinone oxidoreductase 2 (208 aa).

17–19 is a binding site for FMN; sequence SVS.

This sequence belongs to the azoreductase type 1 family. In terms of assembly, homodimer. FMN serves as cofactor.

The catalysed reaction is 2 a quinone + NADH + H(+) = 2 a 1,4-benzosemiquinone + NAD(+). The enzyme catalyses N,N-dimethyl-1,4-phenylenediamine + anthranilate + 2 NAD(+) = 2-(4-dimethylaminophenyl)diazenylbenzoate + 2 NADH + 2 H(+). In terms of biological role, quinone reductase that provides resistance to thiol-specific stress caused by electrophilic quinones. Functionally, also exhibits azoreductase activity. Catalyzes the reductive cleavage of the azo bond in aromatic azo compounds to the corresponding amines. The chain is FMN-dependent NADH:quinone oxidoreductase 2 from Halalkalibacterium halodurans (strain ATCC BAA-125 / DSM 18197 / FERM 7344 / JCM 9153 / C-125) (Bacillus halodurans).